The primary structure comprises 382 residues: MTSAPRPRPTLDDLPLREDLRGKSPYGAPQLAVPVRLNTNENPHPPTQALVDDVVRSVGEAAVDLHRYPDRDAVALRTDLANYLTAQTGTRIGFENVWAANGSNEILQQLLQAFGGPGRTAIGFVPSYSMHPIISDGTHTEWVETARADGFGLDIDAAIAVVSDRRPDVVFITSPNNPTGQSVSLTELRRLLDVVPGILIVDEAYGEFSSQPSAVGLIEEYPTRLVVTRTMSKAFAFAGGRLGYLVATPALIDALLLVRLPYHLSSVTQVAARAALRHAQDTLGSVATLIAERERVSKKLAGMGFRVIPSDANFVLFGEFADAPAAWQRYLDQGVLIRDVGIPGYLRATTGLADENDAFLRASARIAATDLAPAAASPVGAP.

Residues 1-28 form a disordered region; sequence MTSAPRPRPTLDDLPLREDLRGKSPYGA. A compositionally biased stretch (basic and acidic residues) spans 9 to 22; it reads PTLDDLPLREDLRG. Position 233 is an N6-(pyridoxal phosphate)lysine (lysine 233).

The protein belongs to the class-II pyridoxal-phosphate-dependent aminotransferase family. Histidinol-phosphate aminotransferase subfamily. In terms of assembly, homodimer. Pyridoxal 5'-phosphate serves as cofactor.

It carries out the reaction L-histidinol phosphate + 2-oxoglutarate = 3-(imidazol-4-yl)-2-oxopropyl phosphate + L-glutamate. Its pathway is amino-acid biosynthesis; L-histidine biosynthesis; L-histidine from 5-phospho-alpha-D-ribose 1-diphosphate: step 7/9. The sequence is that of Histidinol-phosphate aminotransferase from Mycobacterium marinum (strain ATCC BAA-535 / M).